The primary structure comprises 201 residues: Probable nicotinate-nucleotide adenylyltransferase (201 aa).

Belongs to the NadD family.

It catalyses the reaction nicotinate beta-D-ribonucleotide + ATP + H(+) = deamido-NAD(+) + diphosphate. It functions in the pathway cofactor biosynthesis; NAD(+) biosynthesis; deamido-NAD(+) from nicotinate D-ribonucleotide: step 1/1. Functionally, catalyzes the reversible adenylation of nicotinate mononucleotide (NaMN) to nicotinic acid adenine dinucleotide (NaAD). This Carboxydothermus hydrogenoformans (strain ATCC BAA-161 / DSM 6008 / Z-2901) protein is Probable nicotinate-nucleotide adenylyltransferase.